The following is a 924-amino-acid chain: Mediator of RNA polymerase II transcription subunit 16 (924 aa).

The protein belongs to the Mediator complex subunit 16 family. As to quaternary structure, component of the Mediator complex.

The protein resides in the nucleus. Its function is as follows. Component of the Mediator complex, a coactivator involved in the regulated transcription of nearly all RNA polymerase II-dependent genes. Mediator functions as a bridge to convey information from gene-specific regulatory proteins to the basal RNA polymerase II transcription machinery. Mediator is recruited to promoters by direct interactions with regulatory proteins and serves as a scaffold for the assembly of a functional preinitiation complex with RNA polymerase II and the general transcription factors. This chain is Mediator of RNA polymerase II transcription subunit 16 (SIN4), found in Yarrowia lipolytica (strain CLIB 122 / E 150) (Yeast).